The primary structure comprises 145 residues: Anaerobic nitrite reductase NSHB5 (145 aa).

The Globin domain occupies 2-142 (GFSETQEELV…LAAAIKEEMK (141 aa)). Positions 35 to 39 (EIAPA) match the Homodimerization motif. The heme b site is built by serine 45, histidine 59, lysine 61, arginine 84, threonine 88, and histidine 89. A Homodimerization motif is present at residues 96–108 (DAHFEVVKTALLD).

This sequence belongs to the plant globin family. Homodimer. Heme b is required as a cofactor. In terms of tissue distribution, expressed in embryonic (embryos, coleoptiles and seminal roots) and vegetative (leaves and roots) organs.

Its subcellular location is the cytoplasm. The protein localises to the nucleus. The enzyme catalyses Fe(III)-heme b-[protein] + nitric oxide + H2O = Fe(II)-heme b-[protein] + nitrite + 2 H(+). Phytoglobin that reduces nitrite to nitric oxide under anoxic conditions (e.g. during flooding or in waterlogged soil). May not function as an oxygen storage or transport protein. Has an unusually high affinity for O(2) through an hexacoordinate heme iron because of a very low dissociation constant. This is Anaerobic nitrite reductase NSHB5 from Oryza sativa subsp. indica (Rice).